The primary structure comprises 301 residues: NTE family protein RssA (301 aa).

In terms of domain architecture, PNPLA spans 8–168; it reads LALGSGAARG…VNPIPISLTR (161 aa). The GXSXG signature appears at 39–43; the sequence is GCSIG. The active-site Nucleophile is the Ser41. Asp155 serves as the catalytic Proton acceptor. The DGA/G motif lies at 155–157; the sequence is DGA.

This sequence belongs to the NTE family.

This chain is NTE family protein RssA (rssA), found in Escherichia coli (strain K12).